Consider the following 382-residue polypeptide: MNLKEKTRALFAEIFGYPATHTIQAPGRVNLIGEHTDYNDGFVLPCAIDYQTVISCAPRDDRTVRVIAADYDNQVDEFSLDAPIVTYDSQQWSNYVRGVVKHLQQRNNAFGGVDMVISGNVPQGAGLSSSASLEVAVGTVFQQLYHLPLDGAQIALNGQEAENQFVGCNCGIMDQLISALGKKDHALLIDCRTLGAKAVSMPKGVAVVIINSNFKRTLVGSEYNTRREQCETGARFFQQPALRDVSLEAFNAVASELDPVVAKRVRHVLSENARTVEAASALEKGDLQRMGQLMAESHASMRDDFEITVPQIDTLVDIVKATIGDQGGVRMTGGGFGGCVVALIPEDLVPAVRQAVAQQYEAKTGIKETFYVCKPSQGAGQC.

34-37 is a substrate binding site; it reads EHTD. 124 to 130 lines the ATP pocket; it reads GAGLSSS. S130 and E162 together coordinate Mg(2+). D174 acts as the Proton acceptor in catalysis. Position 223 (Y223) interacts with substrate.

The protein belongs to the GHMP kinase family. GalK subfamily.

The protein localises to the cytoplasm. The catalysed reaction is alpha-D-galactose + ATP = alpha-D-galactose 1-phosphate + ADP + H(+). Its pathway is carbohydrate metabolism; galactose metabolism. Catalyzes the transfer of the gamma-phosphate of ATP to D-galactose to form alpha-D-galactose-1-phosphate (Gal-1-P). The polypeptide is Galactokinase (Salmonella paratyphi B (strain ATCC BAA-1250 / SPB7)).